An 886-amino-acid chain; its full sequence is 3',5'-cyclic-AMP phosphodiesterase 4A (886 aa).

The disordered stretch occupies residues 1 to 128 (MEPPTVPSER…GRSPLDSQAS (128 aa)). Ser13 is subject to Phosphoserine. Low complexity predominate over residues 36–46 (QPRTPIRIQQR). Over residues 51-78 (SAERAERERQPHRPIERADAMDTSDRPG) the composition is skewed to basic and acidic residues. A compositionally biased stretch (gly residues) spans 93-104 (TGTGSGGAGGGS). 2 positions are modified to phosphoserine: Gly119 and Leu123. Ser152 carries the phosphoserine; by MAPKAPK2 modification. 3 positions are modified to phosphoserine: Ser157, Ser165, and Ser209. The tract at residues 294 to 331 (KQNEVEIPSPTMKEREKQQAPRPRPSQPPPPPVPHLQP) is disordered. The span at 315 to 328 (RPRPSQPPPPPVPH) shows a compositional bias: pro residues. Ser346 is subject to Phosphoserine. Residues 357-686 (VKTDQEELLA…DWYYSAIRQS (330 aa)) enclose the PDEase domain. Lys358 is covalently cross-linked (Glycyl lysine isopeptide (Lys-Gly) (interchain with G-Cter in SUMO)). Residue His433 is the Proton donor of the active site. Residue His433 participates in 3',5'-cyclic AMP binding. AMP contacts are provided by His433 and His437. Residues His437, His473, Asp474, and Asp591 each contribute to the Zn(2+) site. AMP is bound by residues Asp474, Asp591, Gln642, and Phe645. Residue Asp474 coordinates Mg(2+). Position 474 (Asp474) interacts with Mn(2+). 3',5'-cyclic AMP is bound by residues Gln642 and Phe645. 2 disordered regions span residues 682-705 (AIRQ…PLPD) and 866-886 (FGED…GDPT). Phosphoserine occurs at positions 686 and 688. Gly residues predominate over residues 876–886 (PGGGGSGGDPT).

The protein belongs to the cyclic nucleotide phosphodiesterase family. PDE4 subfamily. Interacts with LYN (via SH3 domain). Interacts with ARRB2. It depends on Zn(2+) as a cofactor. The cofactor is Mg(2+). Mn(2+) serves as cofactor. Proteolytically cleaved by CASP3. Post-translationally, phosphorylated at Ser-119 by PKA. Expressed in lymphoid cell subsets including CD8-positive T cells and T-helper 2 cells. Expressed in dendritic cells. In terms of tissue distribution, highly expressed in liver, stomach, testis, thyroid and adrenal glands and at a lower extent in placenta, kidney, pancreas, ovary, uterus and skin. Expressed in myeloid cell subsets including dendritic cells, monocytes, macrophages, eosinophils and mast cells. Expressed in natural killer cells. Expressed in bronchial smooth muscle. As to expression, expressed at high levels in the heart and small intestine. It is also found in the brain, kidney, spleen, colon, salivary gland, ovary and peripheral blood lymphocytes. Expressed predominantly in skeletal muscle and brain and at lower levels in the testis. Found in specific neuronal subpopulations including cortical pyramidal neurons, horn neurons in the spinal cord and Purkinje cells in cerebellum (at protein level).

It is found in the cytoplasm. It localises to the perinuclear region. The protein resides in the cell projection. The protein localises to the ruffle membrane. Its subcellular location is the cytosol. It is found in the membrane. It carries out the reaction 3',5'-cyclic AMP + H2O = AMP + H(+). It participates in purine metabolism; 3',5'-cyclic AMP degradation; AMP from 3',5'-cyclic AMP: step 1/1. Inhibited by rolipram, cilomilast, Ro 20-1724, roflumilast and denbufylline. Its activity is regulated as follows. Inhibited by rolipram. With respect to regulation, inhibited by rolipram and cilomilast. In terms of biological role, hydrolyzes the second messenger 3',5'-cyclic AMP (cAMP), which is a key regulator of many important physiological processes. Functionally, efficiently hydrolyzes cAMP. Its function is as follows. Efficiently hydrolyzes cAMP. The phosphodiesterase activity is not affected by calcium, calmodulin or cyclic GMP (cGMP) levels. Does not hydrolyze cGMP. In Homo sapiens (Human), this protein is 3',5'-cyclic-AMP phosphodiesterase 4A (PDE4A).